The chain runs to 185 residues: Large ribosomal subunit protein uL5c (185 aa).

It belongs to the universal ribosomal protein uL5 family. Part of the 50S ribosomal subunit; contacts the 5S rRNA.

The protein resides in the plastid. It is found in the chloroplast. In terms of biological role, binds 5S rRNA, forms part of the central protuberance of the 50S subunit. The protein is Large ribosomal subunit protein uL5c (rpl5) of Chlorokybus atmophyticus (Soil alga).